The primary structure comprises 1050 residues: DNA polymerase I A, chloroplastic/mitochondrial (1050 aa).

Residues 1–91 constitute a chloroplast and mitochondrion transit peptide; the sequence is MAMGVSLTSH…VVFNGEWELR (91 aa). The segment at 202 to 240 is disordered; sequence PRKGLDVGDNMDVNPKGEGIQRPLISDKSSGTANGNKNT. Polar residues predominate over residues 228–240; it reads DKSSGTANGNKNT. Residues 312–490 enclose the 3'-5' exonuclease domain; it reads ELICFSIYCG…LYESMTKKLQ (179 aa). A disordered region spans residues 673 to 694; it reads VVEDDDVETSETQKSKTDDETD. Residues 717–1048 form a polymerase region; that stretch reads AIASLCEVCS…DAKCAQNWYA (332 aa).

The protein belongs to the DNA polymerase type-A family. In terms of tissue distribution, expressed in shoot apical meristem.

The protein localises to the plastid. It localises to the chloroplast. The protein resides in the mitochondrion. It catalyses the reaction DNA(n) + a 2'-deoxyribonucleoside 5'-triphosphate = DNA(n+1) + diphosphate. Not inhibited by aphidicolin. Functionally, in addition to polymerase activity, this DNA polymerase exhibits 5'-3' exonuclease activity. Required for DNA replication and accumulation in plastids and mitochondria. May be required for DNA repair in both organelles. This Arabidopsis thaliana (Mouse-ear cress) protein is DNA polymerase I A, chloroplastic/mitochondrial (POLIA).